A 428-amino-acid chain; its full sequence is Histidine--tRNA ligase (428 aa).

Belongs to the class-II aminoacyl-tRNA synthetase family.

Its subcellular location is the cytoplasm. The catalysed reaction is tRNA(His) + L-histidine + ATP = L-histidyl-tRNA(His) + AMP + diphosphate + H(+). The sequence is that of Histidine--tRNA ligase from Sulfolobus acidocaldarius (strain ATCC 33909 / DSM 639 / JCM 8929 / NBRC 15157 / NCIMB 11770).